The sequence spans 57 residues: UPF0391 membrane protein bsl5717 (57 aa).

2 helical membrane-spanning segments follow: residues 6 to 26 (WALI…TGIS) and 35 to 55 (FLFY…LTIF).

The protein belongs to the UPF0391 family.

The protein localises to the cell membrane. The chain is UPF0391 membrane protein bsl5717 from Bradyrhizobium diazoefficiens (strain JCM 10833 / BCRC 13528 / IAM 13628 / NBRC 14792 / USDA 110).